The following is a 363-amino-acid chain: Isopentenyl-diphosphate delta-isomerase (363 aa).

15–16 provides a ligand contact to substrate; sequence RK. Residues serine 73, 74 to 76, serine 104, and asparagine 133 contribute to the FMN site; that span reads SMT. Substrate is bound at residue 104–106; that stretch reads SMR. Glutamine 168 is a substrate binding site. Glutamate 169 contributes to the Mg(2+) binding site. FMN contacts are provided by residues lysine 200, threonine 230, and 313–314; that span reads AG.

This sequence belongs to the IPP isomerase type 2 family. In terms of assembly, homooctamer. Dimer of tetramers. Requires FMN as cofactor. NADPH is required as a cofactor. Mg(2+) serves as cofactor.

The protein localises to the cytoplasm. It catalyses the reaction isopentenyl diphosphate = dimethylallyl diphosphate. Its function is as follows. Involved in the biosynthesis of isoprenoids. Catalyzes the 1,3-allylic rearrangement of the homoallylic substrate isopentenyl (IPP) to its allylic isomer, dimethylallyl diphosphate (DMAPP). In Chlorobium phaeobacteroides (strain DSM 266 / SMG 266 / 2430), this protein is Isopentenyl-diphosphate delta-isomerase.